The following is a 507-amino-acid chain: Histidine ammonia-lyase (507 aa).

A cross-link (5-imidazolinone (Ala-Gly)) is located at residues 141-143; it reads ASG. At Ser-142 the chain carries 2,3-didehydroalanine (Ser).

Belongs to the PAL/histidase family. Post-translationally, contains an active site 4-methylidene-imidazol-5-one (MIO), which is formed autocatalytically by cyclization and dehydration of residues Ala-Ser-Gly.

It localises to the cytoplasm. It carries out the reaction L-histidine = trans-urocanate + NH4(+). The protein operates within amino-acid degradation; L-histidine degradation into L-glutamate; N-formimidoyl-L-glutamate from L-histidine: step 1/3. This is Histidine ammonia-lyase from Burkholderia ambifaria (strain MC40-6).